A 343-amino-acid chain; its full sequence is GTPase Obg (343 aa).

In terms of domain architecture, Obg spans 1–158 (MFIDEAKIRV…FTLRLELKVL (158 aa)). The tract at residues 121–140 (RGGRGNQHFATSTHQAPREH) is disordered. An OBG-type G domain is found at 159–333 (ADIGIVGYPN…LKYAMAERVR (175 aa)). Residues 165-172 (GYPNVGKS), 190-194 (FTTLE), 215-218 (DIPG), 286-289 (SKID), and 314-316 (SAV) each bind GTP. 2 residues coordinate Mg(2+): Ser172 and Thr192.

Belongs to the TRAFAC class OBG-HflX-like GTPase superfamily. OBG GTPase family. Monomer. The cofactor is Mg(2+).

It is found in the cytoplasm. In terms of biological role, an essential GTPase which binds GTP, GDP and possibly (p)ppGpp with moderate affinity, with high nucleotide exchange rates and a fairly low GTP hydrolysis rate. Plays a role in control of the cell cycle, stress response, ribosome biogenesis and in those bacteria that undergo differentiation, in morphogenesis control. The sequence is that of GTPase Obg from Acidobacterium capsulatum (strain ATCC 51196 / DSM 11244 / BCRC 80197 / JCM 7670 / NBRC 15755 / NCIMB 13165 / 161).